Consider the following 465-residue polypeptide: Ribosomal oxygenase 2 (465 aa).

The JmjC domain occupies 139-271; that stretch reads QPQRFKDELW…NSWGDFLLDT (133 aa). Histidine 179, aspartate 181, and histidine 240 together coordinate Fe cation. At serine 309 the chain carries Phosphoserine.

Belongs to the ROX family. MINA53 subfamily. The cofactor is Fe(2+). Expressed in liver, skeletal muscle, heart, pancreas, and placenta. Not detected in brain, lung or kidney. Expressed in several lung cancer tissues, but is barely detected in the adjacent non-cancerous tissues. Also highly expressed in several esophageal squamous cell carcinoma (ESCC), and colon cancer tissues, and in various cancer cell lines.

It is found in the nucleus. The protein resides in the nucleolus. The enzyme catalyses L-histidyl-[protein] + 2-oxoglutarate + O2 = (3S)-3-hydroxy-L-histidyl-[protein] + succinate + CO2. It catalyses the reaction L-histidyl-[ribosomal protein uL15] + 2-oxoglutarate + O2 = (3S)-3-hydroxy-L-histidyl-[ribosomal protein uL15] + succinate + CO2. Functionally, oxygenase that can act as both a histone lysine demethylase and a ribosomal histidine hydroxylase. Is involved in the demethylation of trimethylated 'Lys-9' on histone H3 (H3K9me3), leading to an increase in ribosomal RNA expression. Also catalyzes the hydroxylation of 60S ribosomal protein L27a on 'His-39'. May play an important role in cell growth and survival. May be involved in ribosome biogenesis, most likely during the assembly process of pre-ribosomal particles. The chain is Ribosomal oxygenase 2 from Homo sapiens (Human).